Reading from the N-terminus, the 390-residue chain is Chorismate synthase 2 (390 aa).

NADP(+) contacts are provided by Arg39 and Arg45. FMN contacts are provided by residues 132–134 (RSS), 253–254 (NA), Gly298, 313–317 (KPIPT), and Arg339.

It belongs to the chorismate synthase family. In terms of assembly, homotetramer. FMNH2 is required as a cofactor.

The enzyme catalyses 5-O-(1-carboxyvinyl)-3-phosphoshikimate = chorismate + phosphate. The protein operates within metabolic intermediate biosynthesis; chorismate biosynthesis; chorismate from D-erythrose 4-phosphate and phosphoenolpyruvate: step 7/7. Catalyzes the anti-1,4-elimination of the C-3 phosphate and the C-6 proR hydrogen from 5-enolpyruvylshikimate-3-phosphate (EPSP) to yield chorismate, which is the branch point compound that serves as the starting substrate for the three terminal pathways of aromatic amino acid biosynthesis. This reaction introduces a second double bond into the aromatic ring system. The chain is Chorismate synthase 2 from Bacillus cereus (strain ATCC 14579 / DSM 31 / CCUG 7414 / JCM 2152 / NBRC 15305 / NCIMB 9373 / NCTC 2599 / NRRL B-3711).